The primary structure comprises 157 residues: Methylglyoxal synthase (157 aa).

One can recognise an MGS-like domain in the interval Met1 to Leu157. Substrate is bound by residues His12, Lys16, Thr38–Thr41, and Ser71–Gly72. Asp77 acts as the Proton donor/acceptor in catalysis. His104 contacts substrate.

The protein belongs to the methylglyoxal synthase family.

The catalysed reaction is dihydroxyacetone phosphate = methylglyoxal + phosphate. Its function is as follows. Catalyzes the formation of methylglyoxal from dihydroxyacetone phosphate. The polypeptide is Methylglyoxal synthase (Maridesulfovibrio salexigens (strain ATCC 14822 / DSM 2638 / NCIMB 8403 / VKM B-1763) (Desulfovibrio salexigens)).